The primary structure comprises 405 residues: GTPase Obg (405 aa).

Positions 1–159 (MRFIDEAVVT…KVLKFELKVV (159 aa)) constitute an Obg domain. The OBG-type G domain maps to 160-333 (ADVGLIGLPN…IKYHLMNEIE (174 aa)). Residues 166-173 (GLPNAGKS), 191-195 (FTTLV), 213-216 (DIPG), 283-286 (NKID), and 314-316 (ATL) contribute to the GTP site. Ser173 and Thr193 together coordinate Mg(2+). Residues 371 to 382 (YRAARKAAREGT) show a composition bias toward basic and acidic residues. The interval 371 to 405 (YRAARKAAREGTDLSDDDFDDSDDDDDGVEVVYAP) is disordered. Over residues 383–399 (DLSDDDFDDSDDDDDGV) the composition is skewed to acidic residues.

It belongs to the TRAFAC class OBG-HflX-like GTPase superfamily. OBG GTPase family. As to quaternary structure, monomer. Requires Mg(2+) as cofactor.

The protein localises to the cytoplasm. In terms of biological role, an essential GTPase which binds GTP, GDP and possibly (p)ppGpp with moderate affinity, with high nucleotide exchange rates and a fairly low GTP hydrolysis rate. Plays a role in control of the cell cycle, stress response, ribosome biogenesis and in those bacteria that undergo differentiation, in morphogenesis control. This Psychrobacter cryohalolentis (strain ATCC BAA-1226 / DSM 17306 / VKM B-2378 / K5) protein is GTPase Obg.